A 291-amino-acid polypeptide reads, in one-letter code: MTTLAIDIGGTKLAAALIGADGQIRDRRELPTPASQTPEALRDALSALVSPLQAHAQRVAIASTGIIRDGSLLALNPHNLGGLLHFPLVKTLEQLTDLPTIAINDAQAAAWAEYQALEGDVTEMVFITVSTGVGGGVVSGGKLLTGPGGLAGHIGHTLADPHGPVCGCGRTGCVEAIASGRGIAAAAQGELAGADARTIFTRAGQGDEQAQQLIHRSARTLARLIADIKATTDCQCVVVGGSVGLAEGYLALVETYLAQEPAAFHVDLLAAHYRHDAGLLGAALLAQGEKL.

Residues 5 to 12 (AIDIGGTK) and 132 to 139 (GVGGGVVS) each bind ATP. H156, C166, C168, and C173 together coordinate Zn(2+).

This sequence belongs to the ROK (NagC/XylR) family. NanK subfamily. In terms of assembly, homodimer.

The enzyme catalyses an N-acyl-D-mannosamine + ATP = an N-acyl-D-mannosamine 6-phosphate + ADP + H(+). It participates in amino-sugar metabolism; N-acetylneuraminate degradation; D-fructose 6-phosphate from N-acetylneuraminate: step 2/5. Catalyzes the phosphorylation of N-acetylmannosamine (ManNAc) to ManNAc-6-P. In Escherichia coli O139:H28 (strain E24377A / ETEC), this protein is N-acetylmannosamine kinase.